A 972-amino-acid polypeptide reads, in one-letter code: Translation initiation factor IF-2 (972 aa).

Positions 49 to 63 are enriched in basic and acidic residues; that stretch reads HLRKSHGATDGDKRK. Disordered regions lie at residues 49 to 86 and 100 to 383; these read HLRKSHGATDGDKRKITLTRKHTSEIKQSDATGKARTI and DDVA…TFQA. The segment covering 105-114 has biased composition (low complexity); the sequence is GAEQGQAQVA. The segment covering 121-177 has biased composition (basic and acidic residues); sequence ELKRREEEARREAELLEKQAQELRERQERLEREEAERRAREEAAEAERRRAEEEAAA. Positions 178 to 209 are enriched in low complexity; the sequence is KRAAAAAVEAQQAAAQQAAEAQQETAGAQSAQ. A compositionally biased stretch (basic and acidic residues) spans 210–261; it reads DEARAAAERAAQREAAKKAEDAAREAADKTRAEQEEIRKRREAAEAEARAIR. Pro residues predominate over residues 277–286; sequence PPKPVEPPKP. Positions 298–327 are enriched in low complexity; it reads KPAGAGAARPAVKKPAGAAPATTQAPAGAG. Over residues 356–369 the composition is skewed to gly residues; the sequence is SSGGVDRGWRGGPK. The 170-residue stretch at 472-641 folds into the tr-type G domain; that stretch reads PRPPVVTVMG…LLQAEVLELK (170 aa). A G1 region spans residues 481 to 488; sequence GHVDHGKT. 481–488 provides a ligand contact to GTP; that stretch reads GHVDHGKT. A G2 region spans residues 506 to 510; that stretch reads GITQH. The interval 527–530 is G3; it reads DTPG. GTP contacts are provided by residues 527-531 and 581-584; these read DTPGH and NKID. Residues 581 to 584 form a G4 region; the sequence is NKID. Positions 617–619 are G5; the sequence is SAK.

The protein belongs to the TRAFAC class translation factor GTPase superfamily. Classic translation factor GTPase family. IF-2 subfamily.

The protein resides in the cytoplasm. One of the essential components for the initiation of protein synthesis. Protects formylmethionyl-tRNA from spontaneous hydrolysis and promotes its binding to the 30S ribosomal subunits. Also involved in the hydrolysis of GTP during the formation of the 70S ribosomal complex. The polypeptide is Translation initiation factor IF-2 (Burkholderia ambifaria (strain MC40-6)).